The primary structure comprises 196 residues: uncharacterized protein (196 aa).

Residues glycine 20 to valine 40 traverse the membrane as a helical segment.

It is found in the membrane. This is an uncharacterized protein from Mycobacterium tuberculosis (strain CDC 1551 / Oshkosh).